Here is a 227-residue protein sequence, read N- to C-terminus: MGQKVHPIGFRLGVTKDWKSKWFADKKKYGQLLHEDVKIRKFVEERYKQAGIADVIIERLGEKVRIKILASKPGIVIGRKGAEVEELNKVLQAVTNAKDVTVNVDEVKKPELNAKLVAEDIALQLERRVSHRRAMKRAIDNAMKAGAKGIKVQVGGRIGGVDLARKEWFMAGRMPLQTIRADIDYGTARASTKYGILGVKVWIYKGDKLAEQKEEVLKKIEEELHTV.

Residues I39–K108 form the KH type-2 domain.

Belongs to the universal ribosomal protein uS3 family. Part of the 30S ribosomal subunit. Forms a tight complex with proteins S10 and S14.

Functionally, binds the lower part of the 30S subunit head. Binds mRNA in the 70S ribosome, positioning it for translation. This chain is Small ribosomal subunit protein uS3, found in Persephonella marina (strain DSM 14350 / EX-H1).